Reading from the N-terminus, the 255-residue chain is UPF0246 protein DP0358 (255 aa).

The protein belongs to the UPF0246 family.

The sequence is that of UPF0246 protein DP0358 from Desulfotalea psychrophila (strain LSv54 / DSM 12343).